Consider the following 509-residue polypeptide: Cytochrome P450 monooxygenase alt3 (509 aa).

A helical membrane pass occupies residues 25-45 (IITGIIVLPVLYVLLKVIYNL). A heme-binding site is contributed by Cys-450.

The protein belongs to the cytochrome P450 family. The cofactor is heme.

It localises to the membrane. Its pathway is secondary metabolite biosynthesis. Functionally, cytochrome P450 monooxygenase; part of the gene cluster that mediates the biosynthesis of alternapyrone derivatives. Alternapyrone is a decaketide with octa-methylation from methionine on every C2 unit except the third unit. All the domains in the polyketide synthase alt5 are apparently involved in alternapyrone synthesis, that is, the 8 CMeT, 7 KR, 7 DH, and 4 ER reactions in the 9 KS-mediated condensation steps required for alternapyrone synthesis. the alternapyrone produced by alt5 might be intensively modified by cytochrome P450 monooxygenases alt1, alt2 and alt3 and FAD-dependent oxidoreductase alt4 present in the alt gene cluster. The sequence is that of Cytochrome P450 monooxygenase alt3 from Alternaria solani.